Reading from the N-terminus, the 588-residue chain is Methylcrotonoyl-CoA carboxylase beta chain, mitochondrial (588 aa).

A CoA carboxyltransferase N-terminal domain is found at 72–329 (MNSTLKQLKE…KKQPSPVITE (258 aa)). Residues 72–570 (MNSTLKQLKE…RKVIALSLSA (499 aa)) are carboxyltransferase. The region spanning 329-570 (ETEEPLYPTS…RKVIALSLSA (242 aa)) is the CoA carboxyltransferase C-terminal domain. The acyl-CoA binding stretch occupies residues 366-395 (RFDEFKELYGTTLICGFARVHGMPVGIIAN).

It belongs to the AccD/PCCB family. In terms of assembly, probably a dodecamer composed of six biotin-containing alpha subunits and six beta subunits.

The protein resides in the mitochondrion matrix. It carries out the reaction 3-methylbut-2-enoyl-CoA + hydrogencarbonate + ATP = 3-methyl-(2E)-glutaconyl-CoA + ADP + phosphate + H(+). It participates in amino-acid degradation; L-leucine degradation; (S)-3-hydroxy-3-methylglutaryl-CoA from 3-isovaleryl-CoA: step 2/3. Functionally, carboxyltransferase subunit of the 3-methylcrotonyl-CoA carboxylase, an enzyme that catalyzes the conversion of 3-methylcrotonyl-CoA to 3-methylglutaconyl-CoA, a critical step for leucine and isovaleric acid catabolism. The protein is Methylcrotonoyl-CoA carboxylase beta chain, mitochondrial (mccb) of Dictyostelium discoideum (Social amoeba).